A 349-amino-acid chain; its full sequence is MDCMSLPRLILTLGDPAGIGPEVVLKALAEPGLASICQLTAIGSRSVLDQTRRQLLAQNPGLNLADPETINLLEVDLSYLGKITVGQGDAVSGAISFAYLNEAITRTLAGEFDAIVTAPIAKSAWQAAGHNYPGQTEVLAHRAGVESFAMAFVGRSPFTGWTLRTLLATTHIPLKEVPQALTPQLMTAKLELLLTCLAQDFGISNPSVAIAGLNPHSGEEGKLGSEEQDWLIPWLEQARKKYPQAQLIGPIPPDTMWVGPGKAWLTDGQTTVSDAYLALYHDQGLIPVKLLAFDQAINTTIGLPFVRTSPDHGTAFDIAGQGIARADSLIAAIKLAAELVEQRCRPRAQ.

Position 136 (Thr-136) interacts with substrate. Positions 171, 216, and 281 each coordinate a divalent metal cation. Substrate-binding residues include Lys-289, Asn-298, and Arg-307.

This sequence belongs to the PdxA family. Homodimer. The cofactor is a divalent metal cation.

Its subcellular location is the cytoplasm. The enzyme catalyses 4-(phosphooxy)-L-threonine + NAD(+) = 3-amino-2-oxopropyl phosphate + CO2 + NADH. It participates in cofactor biosynthesis; pyridoxine 5'-phosphate biosynthesis; pyridoxine 5'-phosphate from D-erythrose 4-phosphate: step 4/5. In terms of biological role, catalyzes the NAD(P)-dependent oxidation of 4-(phosphooxy)-L-threonine (HTP) into 2-amino-3-oxo-4-(phosphooxy)butyric acid which spontaneously decarboxylates to form 3-amino-2-oxopropyl phosphate (AHAP). This chain is 4-hydroxythreonine-4-phosphate dehydrogenase, found in Synechocystis sp. (strain ATCC 27184 / PCC 6803 / Kazusa).